The sequence spans 572 residues: Protein 5NUC (572 aa).

Positions 1-25 (MLFFLNFFVLVFSIELALLTASAAA) are cleaved as a signal peptide. Positions 39 and 41 each coordinate Zn(2+). The cysteines at positions 54 and 64 are disulfide-linked. N-linked (GlcNAc...) asparagine glycosylation is present at asparagine 82. The Zn(2+) site is built by aspartate 93, asparagine 125, histidine 227, and histidine 250. A disulfide bridge connects residues cysteine 360 and cysteine 365. Substrate-binding residues include arginine 361, glutamine 399, arginine 404, and phenylalanine 427. Asparagine 454 and asparagine 490 each carry an N-linked (GlcNAc...) asparagine glycan. Cysteine 488 and cysteine 491 are oxidised to a cystine. 512-518 (FMKDGGD) contributes to the substrate binding site.

Belongs to the 5'-nucleotidase family. It depends on Zn(2+) as a cofactor.

The catalysed reaction is UDP-sugar + H2O = UMP + alpha-D-aldose 1-phosphate.. It carries out the reaction a ribonucleoside 5'-phosphate + H2O = a ribonucleoside + phosphate. In terms of biological role, degradation of external UDP-glucose to uridine monophosphate and glucose-1-phosphate, which can then be used by the cell. In Lutzomyia longipalpis (Sand fly), this protein is Protein 5NUC (5NUC).